Here is a 360-residue protein sequence, read N- to C-terminus: 3-dehydroquinate synthase (360 aa).

NAD(+) is bound by residues 71–76 (DGEQYK), 105–109 (GVVGD), 129–130 (TT), Lys142, Lys151, and 169–172 (TLNT). Zn(2+) is bound by residues Glu184, His248, and His265.

This sequence belongs to the sugar phosphate cyclases superfamily. Dehydroquinate synthase family. The cofactor is Co(2+). Zn(2+) is required as a cofactor. NAD(+) serves as cofactor.

The protein localises to the cytoplasm. It catalyses the reaction 7-phospho-2-dehydro-3-deoxy-D-arabino-heptonate = 3-dehydroquinate + phosphate. Its pathway is metabolic intermediate biosynthesis; chorismate biosynthesis; chorismate from D-erythrose 4-phosphate and phosphoenolpyruvate: step 2/7. Its function is as follows. Catalyzes the conversion of 3-deoxy-D-arabino-heptulosonate 7-phosphate (DAHP) to dehydroquinate (DHQ). The protein is 3-dehydroquinate synthase of Coxiella burnetii (strain CbuG_Q212) (Coxiella burnetii (strain Q212)).